A 523-amino-acid polypeptide reads, in one-letter code: tRNA-2-methylthio-N(6)-dimethylallyladenosine synthase (523 aa).

Positions 1-26 (MNEKQRLEQTGQIQTASHPADRKSDL) are disordered. The span at 8–17 (EQTGQIQTAS) shows a compositional bias: polar residues. In terms of domain architecture, MTTase N-terminal spans 80 to 198 (RKFYIRTYGC…LPYILHEAYM (119 aa)). C89, C125, C159, C235, C239, and C242 together coordinate [4Fe-4S] cluster. One can recognise a Radical SAM core domain in the interval 221–451 (RKGNIKAWVN…NALVQEIAAK (231 aa)). In terms of domain architecture, TRAM spans 454 to 517 (KQYEGQVVEV…TWTLTGELAN (64 aa)).

This sequence belongs to the methylthiotransferase family. MiaB subfamily. In terms of assembly, monomer. The cofactor is [4Fe-4S] cluster.

The protein resides in the cytoplasm. It catalyses the reaction N(6)-dimethylallyladenosine(37) in tRNA + (sulfur carrier)-SH + AH2 + 2 S-adenosyl-L-methionine = 2-methylsulfanyl-N(6)-dimethylallyladenosine(37) in tRNA + (sulfur carrier)-H + 5'-deoxyadenosine + L-methionine + A + S-adenosyl-L-homocysteine + 2 H(+). Its function is as follows. Catalyzes the methylthiolation of N6-(dimethylallyl)adenosine (i(6)A), leading to the formation of 2-methylthio-N6-(dimethylallyl)adenosine (ms(2)i(6)A) at position 37 in tRNAs that read codons beginning with uridine. The protein is tRNA-2-methylthio-N(6)-dimethylallyladenosine synthase of Geobacillus thermodenitrificans (strain NG80-2).